The chain runs to 531 residues: rRNA methyltransferase 1, mitochondrial (531 aa).

A mitochondrion-targeting transit peptide spans 1–40; that stretch reads MISIFKILSSPKPATTTTNIINPINIINGIRYFSSNQEDY. 2 disordered regions span residues 70-141 and 230-277; these read ESHY…RTEY and IEDE…KKTT. Low complexity predominate over residues 74–136; the sequence is NNNNNSNNNS…NNFRNNNNNN (63 aa). Acidic residues predominate over residues 247-267; sequence EQNEYEEEQEEEKVQEEEEDN.

Belongs to the class IV-like SAM-binding methyltransferase superfamily. RNA methyltransferase TrmH family.

The protein localises to the mitochondrion. The catalysed reaction is a uridine in rRNA + S-adenosyl-L-methionine = a 2'-O-methyluridine in rRNA + S-adenosyl-L-homocysteine + H(+). S-adenosyl-L-methionine-dependent 2'-O-ribose methyltransferase that catalyzes the formation of a 2'-O-methylguanosine in the mitochondrial large subunit ribosomal RNA (mtLSU rRNA), a universally conserved modification in the peptidyl transferase domain of the mtLSU rRNA. This Dictyostelium discoideum (Social amoeba) protein is rRNA methyltransferase 1, mitochondrial (mrm1).